The primary structure comprises 251 residues: MGDTGTLVLLRHGESDWNARNLFTGWVDVGLTEKGRAEAVRSGELLAEQDLLPDVLYTSLLRRAITTAHLALDSADRLWIPVRRSWRLNERHYGALQGLDKAETKARYGEEQFMAWRRSYDTPPPLIEKGSEFSQDADPRYANIDGGPLTECLADVVARFLPYFTDVIVGDLRAGKTVLIVAHGNSLRALVKHLDQMSDEDIVGLNIPTGIPLRYDLDERLQPVVPGGTYLDPEAAAAGAAAVASQGAAKA.

Substrate contacts are provided by residues 11 to 18 (RHGESDWN), 24 to 25 (TG), R63, 90 to 93 (ERHY), K101, 117 to 118 (RR), and 184 to 185 (GN). Catalysis depends on H12, which acts as the Tele-phosphohistidine intermediate. E90 serves as the catalytic Proton donor/acceptor.

The protein belongs to the phosphoglycerate mutase family. BPG-dependent PGAM subfamily.

It catalyses the reaction (2R)-2-phosphoglycerate = (2R)-3-phosphoglycerate. It functions in the pathway carbohydrate degradation; glycolysis; pyruvate from D-glyceraldehyde 3-phosphate: step 3/5. Its function is as follows. Catalyzes the interconversion of 2-phosphoglycerate and 3-phosphoglycerate. The chain is 2,3-bisphosphoglycerate-dependent phosphoglycerate mutase from Mycobacterium ulcerans (strain Agy99).